We begin with the raw amino-acid sequence, 317 residues long: Cytochrome c biogenesis protein CcsA (317 aa).

A run of 8 helical transmembrane segments spans residues 9-29 (ILTHISFSVVSIGITIYLITF), 46-63 (TATAFCLTGLLITRWVYS), 71-91 (LYESLIFLSWSLSIIHKIFDF), 98-118 (LSAITAPSAFFTQGFATSGFL), 143-163 (MVLGYAALLCGSLLSTALLVI), 225-245 (IISLGFIFLTTGILSGAVWAN), 258-273 (ETWAFITWTIFGIYLH), and 286-306 (AIVASMGFLIIWICYFGVNLL).

The protein belongs to the CcmF/CycK/Ccl1/NrfE/CcsA family. In terms of assembly, may interact with Ccs1.

It is found in the plastid. It localises to the chloroplast thylakoid membrane. Required during biogenesis of c-type cytochromes (cytochrome c6 and cytochrome f) at the step of heme attachment. The chain is Cytochrome c biogenesis protein CcsA from Citrus sinensis (Sweet orange).